The sequence spans 175 residues: Co-chaperone protein daf-41 (175 aa).

One can recognise a CS domain in the interval 2 to 89; the sequence is AKQPTVLWAQ…KTPAWWPRLL (88 aa). Positions 109–175 are disordered; the sequence is DEDDEAEDAG…EEEGKNGTRA (67 aa). Acidic residues predominate over residues 148 to 168; sequence GLEDDEEDDDMPDLEDNEEEE.

This sequence belongs to the p23/wos2 family. Expressed in anterior and posterior neurons including ASE, AWC, ASI and ADL amphids and phasmid sensory neurons, peripheral neurons and ventral cord motorneurons. Additionally expressed in body wall muscle, pharynx, vulva, germ cells and intestine.

In terms of biological role, co-chaperone for hsp90/daf-21. Involved in regulation of longevity, larval entry and exit from the dauer stage of development and response to environmental cues, such as oxidative stress, in a temperature-dependent manner. Role in daf-16 and hsf-1 inhibition at elevated temperatures. The protein is Co-chaperone protein daf-41 of Caenorhabditis elegans.